A 304-amino-acid polypeptide reads, in one-letter code: Germ cell-specific gene 1-like protein (304 aa).

Residues 1–8 (MKTTRKCR) lie on the Cytoplasmic side of the membrane. Residues 9-29 (ALLSVGLNLLALLFSTTAFIT) traverse the membrane as a helical segment. Over 30-112 (TYWCEGTQRV…FIDLAPASER (83 aa)) the chain is Extracellular. Residues 113 to 133 (GVLWLSVVSEVLYIMLLVVGF) traverse the membrane as a helical segment. Residues 134–153 (SLMCLELFHSSNVIDGLKLN) are Cytoplasmic-facing. Residues 154–174 (AFAAVFTVLSGLLGMVAHMMY) form a helical membrane-spanning segment. Topologically, residues 175 to 197 (TQVFQITVSLGPEDWRPHTWDYG) are extracellular. A helical transmembrane segment spans residues 198-218 (WSFCMAWGSFTCCMAASVTTL). Topologically, residues 219-304 (NSYTKTVIEF…NTESLGEEQC (86 aa)) are cytoplasmic. Residues 266 to 278 (VDVYPSHGSSHGN) are compositionally biased toward polar residues. The disordered stretch occupies residues 266 to 304 (VDVYPSHGSSHGNSRGKMRSPPAPVDQGDNTESLGEEQC).

Belongs to the GSG1 family. In terms of assembly, component of the AMPAR complex.

The protein localises to the cell membrane. It is found in the synapse. Functionally, as a component of the AMPAR complex, modifies AMPA receptor (AMPAR) gating. This Danio rerio (Zebrafish) protein is Germ cell-specific gene 1-like protein (gsg1l).